The chain runs to 357 residues: Peptide chain release factor 1 (357 aa).

Glutamine 236 is subject to N5-methylglutamine. Basic and acidic residues predominate over residues glutamate 283 to arginine 309. The interval glutamate 283–phenylalanine 313 is disordered.

It belongs to the prokaryotic/mitochondrial release factor family. Methylated by PrmC. Methylation increases the termination efficiency of RF1.

It localises to the cytoplasm. Peptide chain release factor 1 directs the termination of translation in response to the peptide chain termination codons UAG and UAA. The protein is Peptide chain release factor 1 of Rickettsia bellii (strain OSU 85-389).